The following is a 599-amino-acid chain: Aspartate--tRNA(Asp/Asn) ligase (599 aa).

E183 contributes to the L-aspartate binding site. The segment at 207–210 is aspartate; sequence QIFK. Position 229 (R229) interacts with L-aspartate. Residues 229 to 231 and Q238 contribute to the ATP site; that span reads RDE. Position 456 (H456) interacts with L-aspartate. E490 is a binding site for ATP. R497 serves as a coordination point for L-aspartate. 542 to 545 contributes to the ATP binding site; sequence GLDR.

This sequence belongs to the class-II aminoacyl-tRNA synthetase family. Type 1 subfamily. Homodimer.

The protein resides in the cytoplasm. The catalysed reaction is tRNA(Asx) + L-aspartate + ATP = L-aspartyl-tRNA(Asx) + AMP + diphosphate. Functionally, aspartyl-tRNA synthetase with relaxed tRNA specificity since it is able to aspartylate not only its cognate tRNA(Asp) but also tRNA(Asn). Reaction proceeds in two steps: L-aspartate is first activated by ATP to form Asp-AMP and then transferred to the acceptor end of tRNA(Asp/Asn). This chain is Aspartate--tRNA(Asp/Asn) ligase, found in Protochlamydia amoebophila (strain UWE25).